The sequence spans 149 residues: Transcriptional repressor NrdR (149 aa).

The segment at 3-34 is a zinc-finger region; that stretch reads CPFCFAVDTKVIDSRLVGEGSSVRRRRQCLVC. One can recognise an ATP-cone domain in the interval 49 to 139; that stretch reads PRVVKSNDVR…VYRSFEDIKE (91 aa).

Belongs to the NrdR family. Requires Zn(2+) as cofactor.

Negatively regulates transcription of bacterial ribonucleotide reductase nrd genes and operons by binding to NrdR-boxes. This chain is Transcriptional repressor NrdR, found in Shigella flexneri.